We begin with the raw amino-acid sequence, 350 residues long: Uroporphyrinogen decarboxylase (350 aa).

Substrate is bound by residues 23 to 27, D72, Y149, S204, and H318; that span reads RQAGR.

It belongs to the uroporphyrinogen decarboxylase family. As to quaternary structure, homodimer.

Its subcellular location is the cytoplasm. It catalyses the reaction uroporphyrinogen III + 4 H(+) = coproporphyrinogen III + 4 CO2. It functions in the pathway porphyrin-containing compound metabolism; protoporphyrin-IX biosynthesis; coproporphyrinogen-III from 5-aminolevulinate: step 4/4. Catalyzes the decarboxylation of four acetate groups of uroporphyrinogen-III to yield coproporphyrinogen-III. The sequence is that of Uroporphyrinogen decarboxylase from Carboxydothermus hydrogenoformans (strain ATCC BAA-161 / DSM 6008 / Z-2901).